The chain runs to 179 residues: ADP-ribosylation factor-like protein 5A (179 aa).

The N-myristoyl glycine moiety is linked to residue Gly2. GTP-binding positions include Gly23 to Thr30, Asp66 to Gln70, Asn125 to Asp128, and Ala159.

Belongs to the small GTPase superfamily. Arf family.

Functionally, lacks ADP-ribosylation enhancing activity. This chain is ADP-ribosylation factor-like protein 5A (ARL5A), found in Bos taurus (Bovine).